Consider the following 303-residue polypeptide: D-alanine--D-alanine ligase (303 aa).

An ATP-grasp domain is found at 99–293 (TYRFLKDIVE…FEELVEIILK (195 aa)). 125 to 176 (GYPCVVKPRREGSSIGVFICESDEEFQHALKEDLPRYGSVIVQKYIPGREMT) lines the ATP pocket. Mg(2+) is bound by residues Asp248, Glu260, and Asn262.

It belongs to the D-alanine--D-alanine ligase family. The cofactor is Mg(2+). Mn(2+) serves as cofactor.

The protein localises to the cytoplasm. The enzyme catalyses 2 D-alanine + ATP = D-alanyl-D-alanine + ADP + phosphate + H(+). It participates in cell wall biogenesis; peptidoglycan biosynthesis. Functionally, cell wall formation. The polypeptide is D-alanine--D-alanine ligase (Thermotoga petrophila (strain ATCC BAA-488 / DSM 13995 / JCM 10881 / RKU-1)).